A 142-amino-acid polypeptide reads, in one-letter code: Small ribosomal subunit protein bS6 (142 aa).

Residues 103–142 (KAAESREQRAPRGEDRPARVVADDVDDSDDDTDDEDSNDE) form a disordered region. Positions 105 to 124 (AESREQRAPRGEDRPARVVA) are enriched in basic and acidic residues. Positions 125-142 (DDVDDSDDDTDDEDSNDE) are enriched in acidic residues.

Belongs to the bacterial ribosomal protein bS6 family.

Binds together with bS18 to 16S ribosomal RNA. The polypeptide is Small ribosomal subunit protein bS6 (Hahella chejuensis (strain KCTC 2396)).